The following is a 156-amino-acid chain: Ribosomal RNA large subunit methyltransferase H (156 aa).

S-adenosyl-L-methionine contacts are provided by residues Leu73, Gly104, and 123 to 128 (LSPLTL).

The protein belongs to the RNA methyltransferase RlmH family. Homodimer.

It is found in the cytoplasm. The enzyme catalyses pseudouridine(1915) in 23S rRNA + S-adenosyl-L-methionine = N(3)-methylpseudouridine(1915) in 23S rRNA + S-adenosyl-L-homocysteine + H(+). In terms of biological role, specifically methylates the pseudouridine at position 1915 (m3Psi1915) in 23S rRNA. In Yersinia pseudotuberculosis serotype O:1b (strain IP 31758), this protein is Ribosomal RNA large subunit methyltransferase H.